The primary structure comprises 37 residues: Large ribosomal subunit protein bL36c (37 aa).

This sequence belongs to the bacterial ribosomal protein bL36 family.

It is found in the plastid. It localises to the chloroplast. The polypeptide is Large ribosomal subunit protein bL36c (Vitis vinifera (Grape)).